A 288-amino-acid polypeptide reads, in one-letter code: Structure-specific endonuclease subunit SLX1 (288 aa).

Residues 10-93 form the GIY-YIG domain; the sequence is DFYCSYLLRS…QHSYKTRFIE (84 aa). The SLX1-type zinc finger occupies 209–265; it reads CMICDKKIDYIHDEGTQMVGFCSDDECDFLSCLSCLYKEFTKNSKQIIPKSGHCPNC.

This sequence belongs to the SLX1 family. In terms of assembly, forms a heterodimer with SLX4. It depends on a divalent metal cation as a cofactor.

The protein resides in the nucleus. Catalytic subunit of the SLX1-SLX4 structure-specific endonuclease that resolves DNA secondary structures generated during DNA repair and recombination. Has endonuclease activity towards branched DNA substrates, introducing single-strand cuts in duplex DNA close to junctions with ss-DNA. This chain is Structure-specific endonuclease subunit SLX1, found in Kluyveromyces lactis (strain ATCC 8585 / CBS 2359 / DSM 70799 / NBRC 1267 / NRRL Y-1140 / WM37) (Yeast).